The primary structure comprises 729 residues: Fatty acid oxidation complex subunit alpha (729 aa).

The tract at residues Met1–Lys189 is enoyl-CoA hydratase/isomerase. Residue Asp296 coordinates substrate. Positions Glu311–Ala729 are 3-hydroxyacyl-CoA dehydrogenase. NAD(+)-binding positions include Met324, Asp343, Val400–Glu402, Lys407, and Ser429. The active-site For 3-hydroxyacyl-CoA dehydrogenase activity is His450. Position 453 (Asn453) interacts with NAD(+). 2 residues coordinate substrate: Asn500 and Tyr660. Residues Arg708 to Ala729 form a disordered region.

It in the N-terminal section; belongs to the enoyl-CoA hydratase/isomerase family. This sequence in the C-terminal section; belongs to the 3-hydroxyacyl-CoA dehydrogenase family. As to quaternary structure, heterotetramer of two alpha chains (FadB) and two beta chains (FadA).

The catalysed reaction is a (3S)-3-hydroxyacyl-CoA + NAD(+) = a 3-oxoacyl-CoA + NADH + H(+). It catalyses the reaction a (3S)-3-hydroxyacyl-CoA = a (2E)-enoyl-CoA + H2O. It carries out the reaction a 4-saturated-(3S)-3-hydroxyacyl-CoA = a (3E)-enoyl-CoA + H2O. The enzyme catalyses (3S)-3-hydroxybutanoyl-CoA = (3R)-3-hydroxybutanoyl-CoA. The catalysed reaction is a (3Z)-enoyl-CoA = a 4-saturated (2E)-enoyl-CoA. It catalyses the reaction a (3E)-enoyl-CoA = a 4-saturated (2E)-enoyl-CoA. It participates in lipid metabolism; fatty acid beta-oxidation. In terms of biological role, involved in the aerobic and anaerobic degradation of long-chain fatty acids via beta-oxidation cycle. Catalyzes the formation of 3-oxoacyl-CoA from enoyl-CoA via L-3-hydroxyacyl-CoA. It can also use D-3-hydroxyacyl-CoA and cis-3-enoyl-CoA as substrate. This chain is Fatty acid oxidation complex subunit alpha, found in Salmonella enteritidis PT4 (strain P125109).